Reading from the N-terminus, the 339-residue chain is DNA-directed RNA polymerase subunit alpha (339 aa).

Positions 1–233 (MVREEVAGST…DLFLPFLHAE (233 aa)) are alpha N-terminal domain (alpha-NTD). Residues 266-339 (GIPLNCIFID…IDLLKNKLSF (74 aa)) are alpha C-terminal domain (alpha-CTD).

The protein belongs to the RNA polymerase alpha chain family. As to quaternary structure, in plastids the minimal PEP RNA polymerase catalytic core is composed of four subunits: alpha, beta, beta', and beta''. When a (nuclear-encoded) sigma factor is associated with the core the holoenzyme is formed, which can initiate transcription.

It is found in the plastid. Its subcellular location is the chloroplast. The enzyme catalyses RNA(n) + a ribonucleoside 5'-triphosphate = RNA(n+1) + diphosphate. Functionally, DNA-dependent RNA polymerase catalyzes the transcription of DNA into RNA using the four ribonucleoside triphosphates as substrates. The chain is DNA-directed RNA polymerase subunit alpha from Elymus canadensis (Canada wild rye).